The chain runs to 145 residues: Transcription antitermination protein NusB (145 aa).

Belongs to the NusB family.

Its function is as follows. Involved in transcription antitermination. Required for transcription of ribosomal RNA (rRNA) genes. Binds specifically to the boxA antiterminator sequence of the ribosomal RNA (rrn) operons. The protein is Transcription antitermination protein NusB of Burkholderia ambifaria (strain MC40-6).